A 299-amino-acid polypeptide reads, in one-letter code: Somaliensene A/B synthase (299 aa).

The next 7 helical transmembrane spans lie at 32–49, 56–72, 110–132, 153–171, 177–194, 222–241, and 247–269; these read WTTL…AVHT, TAVA…LFVY, IAVR…ALLW, LYAG…EIVA, AWRW…LMSV, VFLC…FLMA, and WWIV…RVVL.

It belongs to the UbiA prenyltransferase family. Requires Mg(2+) as cofactor.

The protein localises to the cell membrane. It carries out the reaction (2E,6E,10E,14E)-geranylfarnesyl diphosphate = somaliensene A + diphosphate. The catalysed reaction is (2E,6E,10E,14E)-geranylfarnesyl diphosphate = (-)-somaliensene B + diphosphate. It participates in secondary metabolite biosynthesis; terpenoid biosynthesis. Functionally, sesterterpene cyclase, which converts geranylfarnesyl diphosphate (GFPP) into the terpenes somaliensene A and somaliensene B. This chain is Somaliensene A/B synthase, found in Streptomyces somaliensis (strain ATCC 33201 / DSM 40738 / JCM 12659 / KCTC 9044 / NCTC 11332 / NRRL B-12077 / IP 733).